Reading from the N-terminus, the 482-residue chain is tRNA sulfurtransferase (482 aa).

The THUMP domain maps to 61–165 (LAIRDALTRI…DDRLLLIKGR (105 aa)). Residues 183–184 (LI), Lys265, Gly287, and Gln296 each bind ATP. Cys344 and Cys456 form a disulfide bridge. Residues 404–482 (FGPNDVILDI…GFNNVKVYRP (79 aa)) enclose the Rhodanese domain. The Cysteine persulfide intermediate role is filled by Cys456.

Belongs to the ThiI family.

It localises to the cytoplasm. The enzyme catalyses [ThiI sulfur-carrier protein]-S-sulfanyl-L-cysteine + a uridine in tRNA + 2 reduced [2Fe-2S]-[ferredoxin] + ATP + H(+) = [ThiI sulfur-carrier protein]-L-cysteine + a 4-thiouridine in tRNA + 2 oxidized [2Fe-2S]-[ferredoxin] + AMP + diphosphate. It catalyses the reaction [ThiS sulfur-carrier protein]-C-terminal Gly-Gly-AMP + S-sulfanyl-L-cysteinyl-[cysteine desulfurase] + AH2 = [ThiS sulfur-carrier protein]-C-terminal-Gly-aminoethanethioate + L-cysteinyl-[cysteine desulfurase] + A + AMP + 2 H(+). It participates in cofactor biosynthesis; thiamine diphosphate biosynthesis. In terms of biological role, catalyzes the ATP-dependent transfer of a sulfur to tRNA to produce 4-thiouridine in position 8 of tRNAs, which functions as a near-UV photosensor. Also catalyzes the transfer of sulfur to the sulfur carrier protein ThiS, forming ThiS-thiocarboxylate. This is a step in the synthesis of thiazole, in the thiamine biosynthesis pathway. The sulfur is donated as persulfide by IscS. The polypeptide is tRNA sulfurtransferase (Escherichia coli O127:H6 (strain E2348/69 / EPEC)).